A 520-amino-acid chain; its full sequence is GMP synthase [glutamine-hydrolyzing] (520 aa).

Residues 12-205 enclose the Glutamine amidotransferase type-1 domain; that stretch reads KIIVLDYGSQ…AISICGARGD (194 aa). The active-site Nucleophile is C89. Residues H179 and E181 contribute to the active site. The GMPS ATP-PPase domain occupies 206-395; the sequence is WSMDNFIDME…LGMPEEIVWR (190 aa). 233 to 239 contributes to the ATP binding site; sequence SGGVDSS.

In terms of assembly, homodimer.

The enzyme catalyses XMP + L-glutamine + ATP + H2O = GMP + L-glutamate + AMP + diphosphate + 2 H(+). The protein operates within purine metabolism; GMP biosynthesis; GMP from XMP (L-Gln route): step 1/1. In terms of biological role, catalyzes the synthesis of GMP from XMP. In Streptococcus pyogenes serotype M6 (strain ATCC BAA-946 / MGAS10394), this protein is GMP synthase [glutamine-hydrolyzing].